A 506-amino-acid polypeptide reads, in one-letter code: ATP synthase subunit alpha (506 aa).

Residue 171–178 coordinates ATP; it reads GDRQTGKT.

It belongs to the ATPase alpha/beta chains family. F-type ATPases have 2 components, CF(1) - the catalytic core - and CF(0) - the membrane proton channel. CF(1) has five subunits: alpha(3), beta(3), gamma(1), delta(1), epsilon(1). CF(0) has four main subunits: a(1), b(1), b'(1) and c(9-12).

The protein localises to the cellular thylakoid membrane. It carries out the reaction ATP + H2O + 4 H(+)(in) = ADP + phosphate + 5 H(+)(out). In terms of biological role, produces ATP from ADP in the presence of a proton gradient across the membrane. The alpha chain is a regulatory subunit. This chain is ATP synthase subunit alpha, found in Nostoc sp. (strain PCC 7120 / SAG 25.82 / UTEX 2576).